We begin with the raw amino-acid sequence, 48 residues long: Mating-type pheromone BAP1(2) (48 aa).

Cysteine methyl ester is present on cysteine 45. Cysteine 45 carries the S-farnesyl cysteine lipid modification. Positions 46–48 (VRG) are cleaved as a propeptide — removed in mature form.

It is found in the cell membrane. Activates B-regulated development. The chain is Mating-type pheromone BAP1(2) (BAP1(2)) from Schizophyllum commune (Split gill fungus).